A 393-amino-acid polypeptide reads, in one-letter code: Branched-chain amino acid aminotransferase 1, mitochondrial (393 aa).

The N-terminal 34 residues, 1–34, are a transit peptide targeting the mitochondrion; it reads MIHRGLWLHNLVQSYRVGSSSSSSTLFKLVYRYN. A pyridoxal 5'-phosphate-binding site is contributed by Arg138. Catalysis depends on Lys240, which acts as the Proton acceptor. Position 240 is an N6-(pyridoxal phosphate)lysine (Lys240). Glu276 lines the pyridoxal 5'-phosphate pocket.

This sequence belongs to the class-IV pyridoxal-phosphate-dependent aminotransferase family. Pyridoxal 5'-phosphate is required as a cofactor. Expressed specifically in lupulin glands.

It is found in the mitochondrion. The catalysed reaction is L-isoleucine + 2-oxoglutarate = (S)-3-methyl-2-oxopentanoate + L-glutamate. It catalyses the reaction L-leucine + 2-oxoglutarate = 4-methyl-2-oxopentanoate + L-glutamate. The enzyme catalyses L-valine + 2-oxoglutarate = 3-methyl-2-oxobutanoate + L-glutamate. Its pathway is amino-acid biosynthesis; L-isoleucine biosynthesis; L-isoleucine from 2-oxobutanoate: step 4/4. It participates in amino-acid biosynthesis; L-leucine biosynthesis; L-leucine from 3-methyl-2-oxobutanoate: step 4/4. The protein operates within amino-acid biosynthesis; L-valine biosynthesis; L-valine from pyruvate: step 4/4. Functionally, converts 2-oxo acids to branched-chain amino acids (BCAA). Shows no kinetic preferences corresponding to anabolic or catabolic functions, but likely involved in BCAA catabolism. This is Branched-chain amino acid aminotransferase 1, mitochondrial from Humulus lupulus (European hop).